The following is a 487-amino-acid chain: Lysophospholipid acyltransferase 5 (487 aa).

Residue A2 is modified to N-acetylalanine. The next 6 membrane-spanning stretches (helical) occupy residues 44–64, 84–104, 111–131, 180–200, 227–247, and 285–305; these read LIIS…YLFY, FNFG…FLIL, ITAV…GYYY, GVPS…FLVG, IIPA…YTLL, and VTCW…FNGF. Residues N338 and H374 contribute to the active site. A run of 3 helical transmembrane segments spans residues 364–384, 422–442, and 453–473; these read GLSL…LVCF, LVQQ…FCLF, and SIYF…PYIH. The short motif at 484-487 is the Di-lysine motif element; sequence KKME.

Belongs to the membrane-bound acyltransferase family. Highly expressed in liver, pancreas and adipose tissue. Very low expression in skeletal muscle and heart. Detected in neutrophils.

The protein resides in the endoplasmic reticulum membrane. It carries out the reaction a 1-acyl-sn-glycero-3-phosphocholine + an acyl-CoA = a 1,2-diacyl-sn-glycero-3-phosphocholine + CoA. The enzyme catalyses a 1-acyl-sn-glycero-3-phosphoethanolamine + an acyl-CoA = a 1,2-diacyl-sn-glycero-3-phosphoethanolamine + CoA. It catalyses the reaction a 1-acyl-sn-glycero-3-phospho-L-serine + an acyl-CoA = a 1,2-diacyl-sn-glycero-3-phospho-L-serine + CoA. The catalysed reaction is (9Z,12Z)-octadecadienoyl-CoA + a 1-acyl-sn-glycero-3-phosphocholine = 1-acyl-2-(9Z,12Z)-octadecadienoyl-sn-glycero-3-phosphocholine + CoA. It carries out the reaction (5Z,8Z,11Z,14Z)-eicosatetraenoyl-CoA + a 1-acyl-sn-glycero-3-phosphocholine = 1-acyl-2-(5Z,8Z,11Z,14Z-eicosatetraenoyl)-sn-glycero-3-phosphocholine + CoA. The enzyme catalyses dodecanoyl-CoA + 1-hexadecanoyl-sn-glycero-3-phosphocholine = 1-hexadecanoyl-2-dodecanoyl-sn-glycero-3-phosphocholine + CoA. It catalyses the reaction octadecanoyl-CoA + 1-hexadecanoyl-sn-glycero-3-phosphocholine = 1-hexadecanoyl-2-octadecanoyl-sn-glycero-3-phosphocholine + CoA. The catalysed reaction is 1-dodecanoyl-sn-glycero-3-phosphocholine + hexadecanoyl-CoA = 1-dodecanoyl-2-hexadecanoyl-sn-glycero-3-phosphocholine + CoA. It carries out the reaction 1-tetradecanoyl-sn-glycero-3-phosphocholine + hexadecanoyl-CoA = 1-tetradecanoyl-2-hexadecanoyl-sn-glycero-3-phosphocholine + CoA. The enzyme catalyses 1-hexadecanoyl-sn-glycero-3-phosphocholine + hexadecanoyl-CoA = 1,2-dihexadecanoyl-sn-glycero-3-phosphocholine + CoA. It catalyses the reaction 1-octadecanoyl-sn-glycero-3-phosphocholine + hexadecanoyl-CoA = 1-octadecanoyl-2-hexadecanoyl-sn-glycero-3-phosphocholine + CoA. The catalysed reaction is 1-(9Z-octadecenoyl)-sn-glycero-3-phosphocholine + hexadecanoyl-CoA = 1-(9Z-octadecenoyl)-2-hexadecanoyl-sn-glycero-3-phosphocholine + CoA. It carries out the reaction (9Z)-hexadecenoyl-CoA + 1-hexadecanoyl-sn-glycero-3-phosphocholine = 1-hexadecanoyl-2-(9Z-hexadecenoyl)-sn-glycero-3-phosphocholine + CoA. The enzyme catalyses 1-hexadecanoyl-sn-glycero-3-phosphocholine + (9Z)-octadecenoyl-CoA = 1-hexadecanoyl-2-(9Z-octadecenoyl)-sn-glycero-3-phosphocholine + CoA. It catalyses the reaction (9Z,12Z)-octadecadienoyl-CoA + 1-hexadecanoyl-sn-glycero-3-phosphocholine = 1-hexadecanoyl-2-(9Z,12Z-octadecadienoyl)-sn-glycero-3-phosphocholine + CoA. The catalysed reaction is 1-dodecanoyl-sn-glycero-3-phosphocholine + (5Z,8Z,11Z,14Z)-eicosatetraenoyl-CoA = 1-dodecanoyl-2-(5Z,8Z,11Z,14Z)-eicosatetraenoyl-sn-glycero-3-phosphocholine + CoA. It carries out the reaction (5Z,8Z,11Z,14Z)-eicosatetraenoyl-CoA + 1-hexadecanoyl-sn-glycero-3-phosphocholine = 1-hexadecanoyl-2-(5Z,8Z,11Z,14Z-eicosatetraenoyl)-sn-glycero-3-phosphocholine + CoA. The enzyme catalyses 1-octadecanoyl-sn-glycero-3-phosphocholine + (5Z,8Z,11Z,14Z)-eicosatetraenoyl-CoA = 1-octadecanoyl-2-(5Z,8Z,11Z,14Z-eicosatetraenoyl)-sn-glycero-3-phosphocholine + CoA. It catalyses the reaction 1-eicosanoyl-sn-glycero-3-phosphocholine + (5Z,8Z,11Z,14Z)-eicosatetraenoyl-CoA = 1-eicosanoyl-2-(5Z,8Z,11Z,14Z)-eicosatetraenoyl-sn-glycero-3-phosphocholine + CoA. The catalysed reaction is 1-(9Z-octadecenoyl)-sn-glycero-3-phosphocholine + (9Z)-octadecenoyl-CoA = 1,2-di-(9Z-octadecenoyl)-sn-glycero-3-phosphocholine + CoA. It carries out the reaction 1-(9Z-octadecenoyl)-sn-glycero-3-phosphocholine + (9Z,12Z)-octadecadienoyl-CoA = 1-(9Z)-octadecenoyl-2-(9Z,12Z)-octadecadienoyl-sn-glycero-3-phosphocholine + CoA. The enzyme catalyses 1-(9Z-octadecenoyl)-sn-glycero-3-phosphocholine + (5Z,8Z,11Z,14Z)-eicosatetraenoyl-CoA = 1-(9Z)-octadecenoyl-2-(5Z,8Z,11Z,14Z)-icosatetraenoyl-sn-glycero-3-phosphocholine + CoA. It catalyses the reaction a 1-acyl-sn-glycero-3-phosphoethanolamine + (9Z,12Z)-octadecadienoyl-CoA = 1-acyl-2-(9Z,12Z)-octadecadienoyl-sn-glycero-3-phosphoethanolamine + CoA. The catalysed reaction is 1-(9Z-octadecenoyl)-sn-glycero-3-phosphoethanolamine + (9Z,12Z)-octadecadienoyl-CoA = 1-(9Z)-octadecenoyl-2-(9Z,12Z)-octadecadienoyl-sn-glycero-3-phosphoethanolamine + CoA. It carries out the reaction 1-(10Z-heptadecenoyl)-sn-glycero-3-phosphoethanolamine + (9Z,12Z)-octadecadienoyl-CoA = 1-(10Z-heptadecenoyl)-2-(9Z,12Z-octadecadienoyl)-sn-glycero-3-phosphoethanolamine + CoA. The enzyme catalyses a 1-acyl-sn-glycero-3-phosphoethanolamine + (5Z,8Z,11Z,14Z)-eicosatetraenoyl-CoA = 1-acyl-2-(5Z,8Z,11Z,14Z)-eicosatetraenoyl-sn-glycero-3-phosphoethanolamine + CoA. It catalyses the reaction 1-hexadecanoyl-sn-glycero-3-phosphoethanolamine + (5Z,8Z,11Z,14Z)-eicosatetraenoyl-CoA = 1-hexadecanoyl-2-(5Z,8Z,11Z,14Z-eicosatetraenoyl)-sn-glycero-3-phosphoethanolamine + CoA. The catalysed reaction is 1-(9Z-octadecenoyl)-sn-glycero-3-phosphoethanolamine + (5Z,8Z,11Z,14Z)-eicosatetraenoyl-CoA = 1-(9Z)-octadecenoyl-2-(5Z,8Z,11Z,14Z)-eicosatetraenoyl-sn-glycero-3-phosphoethanolamine + CoA. It carries out the reaction 1-(10Z-heptadecenoyl)-sn-glycero-3-phosphoethanolamine + (5Z,8Z,11Z,14Z)-eicosatetraenoyl-CoA = 1-(10Z-heptadecenoyl)-2-(5Z,8Z,11Z,14Z-eicosatetraenoyl)-sn-glycero-3-phosphoethanolamine + CoA. The enzyme catalyses a 1-O-(1Z-alkenyl)-sn-glycero-3-phosphoethanolamine + (5Z,8Z,11Z,14Z)-eicosatetraenoyl-CoA = 1-O-(1Z)-alkenyl-2-(5Z,8Z,11Z,14Z)-eicosatetraenoyl-sn-glycero-3-phosphoethanolamine + CoA. It catalyses the reaction a 1-acyl-sn-glycero-3-phospho-L-serine + (9Z,12Z)-octadecadienoyl-CoA = 1-acyl-2-(9Z,12Z-octadecadienoyl)-sn-glycero-3-phospho-L-serine + CoA. The catalysed reaction is a 1-acyl-sn-glycero-3-phospho-L-serine + (5Z,8Z,11Z,14Z)-eicosatetraenoyl-CoA = 1-acyl-2-(5Z,8Z,11Z,14Z-eicosatetraenoyl)-sn-glycero-3-phospho-L-serine + CoA. It carries out the reaction 1-hexadecanoyl-sn-glycero-3-phospho-L-serine + (9Z)-octadecenoyl-CoA = 1-hexadecanoyl-2-(9Z-octadecenoyl)-sn-glycero-3-phospho-L-serine + CoA. The enzyme catalyses 1-(9Z-octadecenoyl)-sn-glycero-3-phospho-L-serine + (9Z)-octadecenoyl-CoA = 1,2-di-(9Z)-octadecenoyl-sn-glycero-3-phospho-L-serine + CoA. It catalyses the reaction 1-hexadecanoyl-sn-glycero-3-phospho-L-serine + (9Z,12Z)-octadecadienoyl-CoA = 1-hexadecanoyl-2-(9Z,12Z-octadecadienoyl)-sn-glycero-3-phospho-L-serine + CoA. The catalysed reaction is 1-(9Z-octadecenoyl)-sn-glycero-3-phospho-L-serine + (9Z,12Z)-octadecadienoyl-CoA = 1-(9Z-octadecenoyl)-2-(9Z,12Z-octadienoyl)-sn-glycero-3-phospho-L-serine + CoA. It carries out the reaction 1-hexadecanoyl-sn-glycero-3-phospho-L-serine + (5Z,8Z,11Z,14Z)-eicosatetraenoyl-CoA = 1-hexadecanoyl-2-(5Z,8Z,11Z,14Z-eicosatetraenoyl)-sn-glycero-3-phospho-L-serine + CoA. The enzyme catalyses 1-(9Z-octadecenoyl)-sn-glycero-3-phospho-L-serine + (5Z,8Z,11Z,14Z)-eicosatetraenoyl-CoA = 1-(9Z-octadecenoyl)-2-(5Z,8Z,11Z,14Z-eicosatetraenoyl)-sn-glycero-3-phospho-L-serine + CoA. Its pathway is lipid metabolism; phospholipid metabolism. Its activity is regulated as follows. Activity is inhibited by thimerosal. In terms of biological role, lysophospholipid O-acyltransferase (LPLAT) that catalyzes the reacylation step of the phospholipid remodeling process also known as the Lands cycle. Catalyzes transfer of the fatty acyl chain from fatty acyl-CoA to 1-acyl lysophospholipid to form various classes of phospholipids. Converts 1-acyl lysophosphatidylcholine (LPC) into phosphatidylcholine (PC) (LPCAT activity), 1-acyl lysophosphatidylserine (LPS) into phosphatidylserine (PS) (LPSAT activity) and 1-acyl lysophosphatidylethanolamine (LPE) into phosphatidylethanolamine (PE) (LPEAT activity). Favors polyunsaturated fatty acyl-CoAs as acyl donors compared to saturated fatty acyl-CoAs. Has higher activity for LPC acyl acceptors compared to LPEs and LPSs. Can also transfer the fatty acyl chain from fatty acyl-CoA to 1-O-alkyl lysophospholipid or 1-O-alkenyl lysophospholipid with lower efficiency. Acts as a major LPC O-acyltransferase in liver and intestine. As a component of the liver X receptor/NR1H3 or NR1H2 signaling pathway, mainly catalyzes the incorporation of arachidonate into PCs of endoplasmic reticulum (ER) membranes, increasing membrane dynamics and enabling triacylglycerols transfer to nascent very low-density lipoprotein (VLDL) particles. Promotes processing of sterol regulatory protein SREBF1 in hepatocytes, likely by facilitating the translocation of SREBF1-SCAP complex from ER to the Golgi apparatus. Participates in mechanisms by which the liver X receptor/NR1H3 or NR1H2 signaling pathway counteracts lipid-induced ER stress response and inflammation. Down-regulates hepatic inflammation by limiting arachidonic acid availability for synthesis of inflammatory eicosanoids, such as prostaglandins. In enterocytes, acts as a component of a gut-brain feedback loop that coordinates dietary lipid absorption and food intake. Regulates the abundance of PCs containing linoleate and arachidonate in enterocyte membranes, enabling passive diffusion of fatty acids and cholesterol across the membrane for efficient chylomicron assembly. In the intestinal crypt, acts as a component of dietary-responsive phospholipid-cholesterol axis, regulating the biosynthesis of cholesterol and its mitogenic effects on intestinal stem cells. This Homo sapiens (Human) protein is Lysophospholipid acyltransferase 5 (LPCAT3).